Here is a 402-residue protein sequence, read N- to C-terminus: Phosphopentomutase (402 aa).

Asp10, Asp301, His306, Asp342, His343, and His354 together coordinate Mn(2+).

The protein belongs to the phosphopentomutase family. It depends on Mn(2+) as a cofactor.

It localises to the cytoplasm. It catalyses the reaction 2-deoxy-alpha-D-ribose 1-phosphate = 2-deoxy-D-ribose 5-phosphate. It carries out the reaction alpha-D-ribose 1-phosphate = D-ribose 5-phosphate. Its pathway is carbohydrate degradation; 2-deoxy-D-ribose 1-phosphate degradation; D-glyceraldehyde 3-phosphate and acetaldehyde from 2-deoxy-alpha-D-ribose 1-phosphate: step 1/2. Isomerase that catalyzes the conversion of deoxy-ribose 1-phosphate (dRib-1-P) and ribose 1-phosphate (Rib-1-P) to deoxy-ribose 5-phosphate (dRib-5-P) and ribose 5-phosphate (Rib-5-P), respectively. The polypeptide is Phosphopentomutase (Aeromonas hydrophila subsp. hydrophila (strain ATCC 7966 / DSM 30187 / BCRC 13018 / CCUG 14551 / JCM 1027 / KCTC 2358 / NCIMB 9240 / NCTC 8049)).